A 468-amino-acid polypeptide reads, in one-letter code: MAGVNGDRKGKKDDNGLGTAIDFVLSNAKLVLGVGGAAMLGIATLAVKRMYDRALSAPSSPTKADPSGRRSWEEPSWLGSSPRTLNHDMKQNVSRSLQTLPTSSSSFKPDSLHRGLARGGRPAKAELQRARLRLSLQEHLWAFFHERVTIPSEEQSVARRAALDICAELRVFLHAKLPDMPLREMYLSGSLYDDLQVVTADHAQLMVPLILEKNLWSSIPGEDTIMNIPGFSLVRRENLEYFPRGSSYWDRCMVGGYLSPKSVLEVFEKLVAGSINWPAIGSVLDYVIRPVVPSETLTLEVQYETDRRLYVDFLPLLVMEDGVSLIAKPHRLAAERHENLWRQSFRVAETAKLRALDQEDAGCRSVCLKILKAVCKLNPALARLNASQLTNAILLLSEQEGDWTQEALADRFMQLLRALVGHLEAGRMPCTLNLKVNLLCELTPQEIDELGYTLYCALSDPESLLRTV.

Residues 1–29 (MAGVNGDRKGKKDDNGLGTAIDFVLSNAK) are Mitochondrial intermembrane-facing. A helical membrane pass occupies residues 30 to 47 (LVLGVGGAAMLGIATLAV). Residues 48 to 468 (KRMYDRALSA…SDPESLLRTV (421 aa)) lie on the Cytoplasmic side of the membrane. Residues 50 to 196 (MYDRALSAPS…LSGSLYDDLQ (147 aa)) are dimerization. Residues 56–123 (SAPSSPTKAD…RGLARGGRPA (68 aa)) are disordered. Polar residues predominate over residues 91–108 (QNVSRSLQTLPTSSSSFK). The important for interaction with DNM1L stretch occupies residues 161–170 (AALDICAELR). ADP-binding residues include Ser188, Ser190, and His202. The segment at 235 to 244 (RRENLEYFPR) is important for interaction with DNM1L. Ser344, Arg346, and Lys372 together coordinate ADP.

This sequence belongs to the MID49/MID51 family. Homodimer.

It is found in the mitochondrion outer membrane. Its function is as follows. Mitochondrial outer membrane protein which regulates mitochondrial fission/fusion dynamics. Promotes the recruitment and association of the fission mediator dynamin-related protein 1 (DNM1L) to the mitochondrial surface independently of the mitochondrial fission FIS1 and MFF proteins. Regulates DNM1L GTPase activity and DNM1L oligomerization. This Danio rerio (Zebrafish) protein is Mitochondrial dynamics protein MID51 (mief1).